We begin with the raw amino-acid sequence, 271 residues long: Gasdermin bGSDM (271 aa).

Cys7 carries S-palmitoyl cysteine lipidation. Transmembrane regions (beta stranded) follow at residues 74 to 90 (IAGTQSADLDVDLGLSV), 102 to 120 (TLGVDAAFARAATVQFEFS), 168 to 185 (RINVAAKDSNKQSLGLNL), and 194 to 210 (ANVKIAAAAASGSTVSF).

Belongs to the bacterial gasdermin family. As to quaternary structure, monomer. Forms large, homooligomeric ring-shaped pores when inserted in membranes. Palmitoylation helps stabilize the inactive state; may self palmitoylate. Palmitoylation plays a significant role in pore formation.

The protein localises to the cytoplasm. Its subcellular location is the cell inner membrane. The full-length protein before cleavage is inactive: intramolecular interactions between the N-terminal domain and the C-terminal region as well as the lipid modification, mediate autoinhibition. The pyroptosis-like-inducing activity is carried by the released N-terminal domain (Gasdermin bGSDM, N-terminus). Its function is as follows. Involved in defense against bacteriophages. When this probable 4 gene operon (bGSDM-FE772_23060-FE772_23065-FE772_23070) is inserted into E.coli it provides nearly 100-fold protection against phages T5 and T6 and about 8-fold against phage T4. The operon without bGSDM no longer protects against phage. Cleavage of this precursor by its dedicated protease(s) releases the active moiety (gasdermin bGSDM, N-terminus) which inserts into membranes, forming pores and triggering cell death. In terms of biological role, pore-forming protein that causes membrane permeabilization via a pyroptosis-like activity. Makes ring-like pores when released. This chain is Gasdermin bGSDM, found in Lysobacter enzymogenes.